The sequence spans 92 residues: Small ribosomal subunit protein uS19 (92 aa).

It belongs to the universal ribosomal protein uS19 family.

Functionally, protein S19 forms a complex with S13 that binds strongly to the 16S ribosomal RNA. The polypeptide is Small ribosomal subunit protein uS19 (Bacillus pumilus (strain SAFR-032)).